Here is a 119-residue protein sequence, read N- to C-terminus: Large ribosomal subunit protein bL20 (119 aa).

It belongs to the bacterial ribosomal protein bL20 family.

Its function is as follows. Binds directly to 23S ribosomal RNA and is necessary for the in vitro assembly process of the 50S ribosomal subunit. It is not involved in the protein synthesizing functions of that subunit. This chain is Large ribosomal subunit protein bL20, found in Thermoanaerobacter sp. (strain X514).